The chain runs to 265 residues: Glutamate racemase 2 (265 aa).

Substrate contacts are provided by residues 7–8 (DS) and 39–40 (YG). Catalysis depends on Cys-70, which acts as the Proton donor/acceptor. Position 71 to 72 (71 to 72 (NT)) interacts with substrate. Cys-182 functions as the Proton donor/acceptor in the catalytic mechanism. Residue 183 to 184 (TH) coordinates substrate.

Belongs to the aspartate/glutamate racemases family.

The catalysed reaction is L-glutamate = D-glutamate. Its pathway is cell wall biogenesis; peptidoglycan biosynthesis. In terms of biological role, provides the (R)-glutamate required for cell wall biosynthesis. The polypeptide is Glutamate racemase 2 (yrpC) (Bacillus subtilis (strain 168)).